The chain runs to 634 residues: MMKEFNPREIEKKWQKRWEEAGVFKAQEGKPNKFYVLEMFPYPSGRIHMGHVRNYTIGDAIARYLKMRGKNILHPMGWDAFGLPAENAAIKHGIHPAKWTYENIDYMKKQLKILGFSYDWDREIATCDPEYYKWNQWIFLKMLERGIAYRKTAKVNWCPHDQTVLANEQVIEGKCWRCGTPIVQKEVPSWFLRITAYADRLLEDLKKLEGKWPERVIAQQRNWIGRSEGALIRFYVEIEEPEKFLNCVPEELKETLLKEKRIYIDVFTTRPDTVFGATFVVLAPEHPLVPVLACIGERLGNACYSDVENFVEKMKKMSTRERTMEEDKEGVFLGVYATNPANGEKIPVWSANYVLYEYGTGAIMCVPAHDQRDWEFAKKYDLPIKVVVKPEGAWDFEKGAYEGKGTLVNSDGFDGLDSETAKRKITEWLQDRGLGEKKVSYRLRDWNISRQRYWGTPIPVVYCEKCGMVPVPEDQLPVKLPLDVKFTGQGNPLETSEEFVNTTCPKCGGKARRETDTMDTFFDSSWYFLRFCDPKNDREPFSREKVDYWMPVDVYIGGIEHAVLHLLYARFFQKFLKDLGLVRDDEPFEKLITQGMVLKKWVSVKKLLDYLGLSEEDEVEELKKRLEELGARRA.

Positions 43-51 (PSGRIHMGH) match the 'HIGH' region motif.

This sequence belongs to the class-I aminoacyl-tRNA synthetase family. In terms of assembly, seems to consist of an alpha chain and a beta chain.

Its subcellular location is the cytoplasm. The enzyme catalyses tRNA(Leu) + L-leucine + ATP = L-leucyl-tRNA(Leu) + AMP + diphosphate. The sequence is that of Leucine--tRNA ligase subunit alpha (leuS) from Aquifex aeolicus (strain VF5).